The primary structure comprises 878 residues: Serine/threonine-protein kinase N3 (878 aa).

REM-1 domains follow at residues 2–77 (EHRK…QVLL), 86–165 (SEPQ…SGSP), and 169–238 (PDLL…RLPP). Ser-164 carries the post-translational modification Phosphoserine. A disordered region spans residues 461 to 525 (PNTASPPKGR…TPCTKRPHMD (65 aa)). One can recognise a Protein kinase domain in the interval 548–807 (FRCLAVLGRG…AEEIKVQPFF (260 aa)). ATP is bound by residues 554-562 (LGRGHFGKV) and Lys-577. Asp-673 acts as the Proton acceptor in catalysis. A phosphothreonine mark is found at Thr-707, Thr-711, and Thr-849. An AGC-kinase C-terminal domain is found at 808–878 (RTTNWQALLA…DFVSEQFLES (71 aa)).

It belongs to the protein kinase superfamily. AGC Ser/Thr protein kinase family. PKC subfamily. In terms of processing, autophosphorylated.

The protein resides in the nucleus. Its subcellular location is the cytoplasm. The protein localises to the perinuclear region. The enzyme catalyses L-seryl-[protein] + ATP = O-phospho-L-seryl-[protein] + ADP + H(+). The catalysed reaction is L-threonyl-[protein] + ATP = O-phospho-L-threonyl-[protein] + ADP + H(+). Its activity is regulated as follows. Two specific sites, Thr-707 (activation loop of the kinase domain) and Thr-849 (turn motif), need to be phosphorylated for its full activation. In terms of biological role, contributes to invasiveness in malignant prostate cancer. This chain is Serine/threonine-protein kinase N3 (Pkn3), found in Mus musculus (Mouse).